A 130-amino-acid chain; its full sequence is Small ribosomal subunit protein uS11 (130 aa).

Belongs to the universal ribosomal protein uS11 family. In terms of assembly, part of the 30S ribosomal subunit. Interacts with proteins S7 and S18. Binds to IF-3.

Its function is as follows. Located on the platform of the 30S subunit, it bridges several disparate RNA helices of the 16S rRNA. Forms part of the Shine-Dalgarno cleft in the 70S ribosome. The chain is Small ribosomal subunit protein uS11 from Thermotoga maritima (strain ATCC 43589 / DSM 3109 / JCM 10099 / NBRC 100826 / MSB8).